The chain runs to 326 residues: MAFKIIETASALPANIVTNDDLTAIMETSNEWIESRTGILERRISETENTSDLCLRVAQTLLDKSGIAVSQIKAIIVATMTPDYYTPSTAAIVQGRLGADQAFAFDISAACSGFTYALSAARGYVQTPDDYVLVIGGEVISKMLDWSDRSTAVLFGDGAAGVLLQGTTSDQESWVSEKLITIGTESDQLVSGYAPVKRPNFGQVGQTQVGIDFFKMTGKAIYQFSTRRVPKAIEAAVLEAGLTLDQIDHFLVHQANSRLITKMASMLDQPLTKFPMNLQHYGNTSAASIPLLLAEQVETNQIKRGDLCVLCGFGGGLTIGIQIIRY.

Residues Cys111 and His253 contribute to the active site. The interval 254–258 (QANSR) is ACP-binding. Asn283 is an active-site residue.

This sequence belongs to the thiolase-like superfamily. FabH family. In terms of assembly, homodimer.

The protein localises to the cytoplasm. It carries out the reaction malonyl-[ACP] + acetyl-CoA + H(+) = 3-oxobutanoyl-[ACP] + CO2 + CoA. It functions in the pathway lipid metabolism; fatty acid biosynthesis. In terms of biological role, catalyzes the condensation reaction of fatty acid synthesis by the addition to an acyl acceptor of two carbons from malonyl-ACP. Catalyzes the first condensation reaction which initiates fatty acid synthesis and may therefore play a role in governing the total rate of fatty acid production. Possesses both acetoacetyl-ACP synthase and acetyl transacylase activities. Its substrate specificity determines the biosynthesis of branched-chain and/or straight-chain of fatty acids. The sequence is that of Beta-ketoacyl-[acyl-carrier-protein] synthase III from Latilactobacillus sakei subsp. sakei (strain 23K) (Lactobacillus sakei subsp. sakei).